Reading from the N-terminus, the 439-residue chain is tRNA(Ile)-lysidine synthase (439 aa).

23–28 (SGGLDS) contacts ATP.

Belongs to the tRNA(Ile)-lysidine synthase family.

It localises to the cytoplasm. It carries out the reaction cytidine(34) in tRNA(Ile2) + L-lysine + ATP = lysidine(34) in tRNA(Ile2) + AMP + diphosphate + H(+). Ligates lysine onto the cytidine present at position 34 of the AUA codon-specific tRNA(Ile) that contains the anticodon CAU, in an ATP-dependent manner. Cytidine is converted to lysidine, thus changing the amino acid specificity of the tRNA from methionine to isoleucine. The protein is tRNA(Ile)-lysidine synthase of Methylococcus capsulatus (strain ATCC 33009 / NCIMB 11132 / Bath).